The primary structure comprises 701 residues: Elongation factor G (701 aa).

The region spanning 11–287 (TKVRNIGIMA…AVIDYLPSPL (277 aa)) is the tr-type G domain. Residues 20 to 27 (AHIDAGKT), 84 to 88 (DTPGH), and 138 to 141 (NKMD) each bind GTP.

The protein belongs to the TRAFAC class translation factor GTPase superfamily. Classic translation factor GTPase family. EF-G/EF-2 subfamily.

The protein localises to the cytoplasm. Its function is as follows. Catalyzes the GTP-dependent ribosomal translocation step during translation elongation. During this step, the ribosome changes from the pre-translocational (PRE) to the post-translocational (POST) state as the newly formed A-site-bound peptidyl-tRNA and P-site-bound deacylated tRNA move to the P and E sites, respectively. Catalyzes the coordinated movement of the two tRNA molecules, the mRNA and conformational changes in the ribosome. The polypeptide is Elongation factor G (Mycobacterium marinum (strain ATCC BAA-535 / M)).